We begin with the raw amino-acid sequence, 335 residues long: Biotin synthase (335 aa).

In terms of domain architecture, Radical SAM core spans 50-279 (ADIQRAALLS…KARVRLSAGR (230 aa)). Positions 65, 69, and 72 each coordinate [4Fe-4S] cluster. 4 residues coordinate [2Fe-2S] cluster: C110, C142, C202, and R274.

Belongs to the radical SAM superfamily. Biotin synthase family. In terms of assembly, homodimer. Requires [4Fe-4S] cluster as cofactor. The cofactor is [2Fe-2S] cluster.

It catalyses the reaction (4R,5S)-dethiobiotin + (sulfur carrier)-SH + 2 reduced [2Fe-2S]-[ferredoxin] + 2 S-adenosyl-L-methionine = (sulfur carrier)-H + biotin + 2 5'-deoxyadenosine + 2 L-methionine + 2 oxidized [2Fe-2S]-[ferredoxin]. The protein operates within cofactor biosynthesis; biotin biosynthesis; biotin from 7,8-diaminononanoate: step 2/2. Functionally, catalyzes the conversion of dethiobiotin (DTB) to biotin by the insertion of a sulfur atom into dethiobiotin via a radical-based mechanism. In Methylorubrum extorquens (strain CM4 / NCIMB 13688) (Methylobacterium extorquens), this protein is Biotin synthase.